Consider the following 471-residue polypeptide: Tetratricopeptide repeat protein 29 (471 aa).

TPR repeat units lie at residues 92–131, 136–173, 182–215, 234–267, 274–307, 314–347, and 354–387; these read DKLR…EAAE, YEEV…AQLI, AEAE…TQGR, VRTY…AREG, GEAS…STSL, GRAY…ARNN, and IQAC…AMEV.

Its subcellular location is the cytoplasm. It localises to the cytoskeleton. It is found in the flagellum axoneme. Axonemal protein which is implicated in axonemal and/or peri-axonemal structure assembly and regulates flagellum assembly and beating and therefore sperm motility. The sequence is that of Tetratricopeptide repeat protein 29 (Ttc29) from Rattus norvegicus (Rat).